The chain runs to 351 residues: Phenylalanine--tRNA ligase alpha subunit (351 aa).

A disordered region spans residues 45–69 (LGDDAPIPAARRSLGSLPKDQRKDA). A Mg(2+)-binding site is contributed by Glu-269.

This sequence belongs to the class-II aminoacyl-tRNA synthetase family. Phe-tRNA synthetase alpha subunit type 1 subfamily. Tetramer of two alpha and two beta subunits. Mg(2+) serves as cofactor.

It is found in the cytoplasm. It carries out the reaction tRNA(Phe) + L-phenylalanine + ATP = L-phenylalanyl-tRNA(Phe) + AMP + diphosphate + H(+). The chain is Phenylalanine--tRNA ligase alpha subunit from Corynebacterium jeikeium (strain K411).